We begin with the raw amino-acid sequence, 98 residues long: Small ribosomal subunit protein uS19 (98 aa).

Residues 77-98 (TRTFRGHAGGKAEKGGSAPKRK) form a disordered region.

The protein belongs to the universal ribosomal protein uS19 family.

Its function is as follows. Protein S19 forms a complex with S13 that binds strongly to the 16S ribosomal RNA. The polypeptide is Small ribosomal subunit protein uS19 (Chlorobium luteolum (strain DSM 273 / BCRC 81028 / 2530) (Pelodictyon luteolum)).